The primary structure comprises 244 residues: Agamous-like MADS-box protein MADS2 (244 aa).

The region spanning 1–61 is the MADS-box domain; the sequence is MGRGRVELKR…GKLYEFCSSS (61 aa). One can recognise a K-box domain in the interval 88 to 178; that stretch reads EQSSYREYLK…TRKLDEISVK (91 aa).

In terms of tissue distribution, expressed in flowers and seeds.

Its subcellular location is the nucleus. Functionally, probable transcription factor involved in flower development. The chain is Agamous-like MADS-box protein MADS2 from Vitis vinifera (Grape).